A 216-amino-acid chain; its full sequence is Elongation factor Ts (216 aa).

An involved in Mg(2+) ion dislocation from EF-Tu region spans residues Thr-81–Val-84.

It belongs to the EF-Ts family.

Its subcellular location is the cytoplasm. Associates with the EF-Tu.GDP complex and induces the exchange of GDP to GTP. It remains bound to the aminoacyl-tRNA.EF-Tu.GTP complex up to the GTP hydrolysis stage on the ribosome. The protein is Elongation factor Ts of Geotalea daltonii (strain DSM 22248 / JCM 15807 / FRC-32) (Geobacter daltonii).